The sequence spans 548 residues: Natural resistance-associated macrophage protein 1 (548 aa).

The tract at residues 1-38 (MSGDTGPPKQGGTRYGSISSPPSPEPQQAPPGGTYLSE) is disordered. The Cytoplasmic portion of the chain corresponds to 1-55 (MSGDTGPPKQGGTRYGSISSPPSPEPQQAPPGGTYLSEKIPIPDTESGTFSLRKL). The helical transmembrane segment at 56 to 73 (WAFTGPGFLMSIAFLDPG) threads the bilayer. Residues 74–82 (NIESDLQAG) lie on the Extracellular side of the membrane. The helical transmembrane segment at 83-102 (AVAGFKLLWVLLWATVLGLL) threads the bilayer. The Cytoplasmic segment spans residues 103–139 (CQRLAARLGVVTGKDLGEVCHLYYPKVPRILLWLTIE). A helical transmembrane segment spans residues 140 to 160 (LAIVGSDMQEVIGTAIAFSLL). The Extracellular portion of the chain corresponds to 161–164 (SAGR). A helical membrane pass occupies residues 165-184 (IPLWGGVLITIVDAFFFLFL). The Cytoplasmic portion of the chain corresponds to 185–193 (DNYGLRKLE). The chain crosses the membrane as a helical span at residues 194–214 (AFFGFLITIMALTFGYEYVVA). At 215-237 (QPAQGALLQGLFLPSCPGCGQPE) the chain is on the extracellular side. The chain crosses the membrane as a helical span at residues 238 to 256 (LLQAVGIIGAIIMPHNIYL). Over 257–284 (HSSLVKSREVDRSRRADIREANMYFLIE) the chain is Cytoplasmic. A helical membrane pass occupies residues 285–304 (ATIALSVSFLINLFVMAVFG). Residues 305–346 (QAFYKQTNQAAFNICANSSLQDYAPIFPRNNLTVAVDIYQGG) lie on the Extracellular side of the membrane. Residues asparagine 321 and asparagine 335 are each glycosylated (N-linked (GlcNAc...) asparagine). A helical transmembrane segment spans residues 347-366 (VILGCLFGPAALYIWAVGLL). Over 367-397 (AAGQSSTMTGTYAGQFVMEGFLKLRWSRFAR) the chain is Cytoplasmic. A helical membrane pass occupies residues 398 to 415 (VLLTRSCAILPTVLLAVF). The Extracellular portion of the chain corresponds to 416-426 (RDLRDLSGLND). Residues 427-447 (LLNVLQSLLLPFAVLPILTFT) form a helical membrane-spanning segment. Topologically, residues 448–463 (SMPALMREFANGLVSK) are cytoplasmic. Residues 464 to 485 (VITSSIMVLVCAVNLYFVISYV) form a helical membrane-spanning segment. Topologically, residues 486-493 (PSLPHPAY) are extracellular. The helical transmembrane segment at 494–513 (FSLVALLAAAYLGLTTYLVW) threads the bilayer. Residues 514-548 (TCLITQGATLLAHSSHQRFLYGLPEEDQEKGRTSG) lie on the Cytoplasmic side of the membrane.

The protein belongs to the NRAMP family.

The protein localises to the late endosome membrane. It is found in the lysosome membrane. The catalysed reaction is Zn(2+)(in) + H(+)(out) = Zn(2+)(out) + H(+)(in). The enzyme catalyses Fe(2+)(in) + H(+)(out) = Fe(2+)(out) + H(+)(in). It catalyses the reaction Mn(2+)(in) + H(+)(out) = Mn(2+)(out) + H(+)(in). Its function is as follows. Macrophage-specific antiporter that fluxes metal ions in either direction against a proton gradient. Localized to late endosomal lysosomal membranes, delivers bivalent cations from the cytosol into these acidic compartments where they may directly affect antimicrobial activity. Involved in iron metabolism and host natural resistance to infection with intracellular parasites. Pathogen resistance involves sequestration of Fe(2+) and Mn(2+), cofactors of both prokaryotic and eukaryotic catalases and superoxide dismutases, not only to protect the macrophage against its own generation of reactive oxygen species, but to deny the cations to the pathogen for synthesis of its protective enzymes. This Bison bison (American bison) protein is Natural resistance-associated macrophage protein 1 (SLC11A1).